A 1575-amino-acid chain; its full sequence is Mediator of RNA polymerase II transcription subunit 1 (1575 aa).

The tract at residues 1–670 (MKAQGETEDS…YGSSPLERQN (670 aa)) is interaction with the Mediator complex and THRA. The interaction with ESR1 stretch occupies residues 16–590 (MSSLLERLHA…SIKDRHESVG (575 aa)). Interaction with the Mediator complex stretches follow at residues 108–212 (FYVE…GYLT) and 215–390 (SGGH…SLQG). Residues 405-644 (PLILNMIRHQ…MAGNTKNHPM (240 aa)) form an interaction with THRA region. The interval 542 to 789 (PASSPGYGMT…TDILSDIAEE (248 aa)) is interaction with VDR. The residue at position 588 (S588) is a Phosphoserine. The LXXLL motif 1 signature appears at 604 to 608 (LTSLL). Disordered regions lie at residues 609 to 706 (QITG…QTED), 737 to 760 (HITPAPSQCSTPPATYPQPVSHPQ), 791 to 818 (SKLPSTSDDCPPIGTPVRDSSSSGHSQS), 874 to 895 (SQSGFGEEYFDESSQSGDNDDF), and 951 to 1564 (SGSQ…GEED). Residues 622 to 632 (PTPPHHTPPPV) show a composition bias toward pro residues. The segment at 622 to 701 (PTPPHHTPPP…SSRVPPDKPK (80 aa)) is interaction with GATA1. Residues 622–701 (PTPPHHTPPP…SSRVPPDKPK (80 aa)) form an interaction with PPARGC1A and THRA region. Positions 645–649 (LMNLL) match the LXXLL motif 2 motif. Residues 655-675 (QDFSTLYGSSPLERQNSSSGS) are compositionally biased toward polar residues. The interval 656–1066 (DFSTLYGSSP…TPPIPKITIQ (411 aa)) is interaction with ESR1. Phosphoserine is present on S664. Positions 696–706 (PPDKPKHQTED) are enriched in basic and acidic residues. Residue S795 is modified to Phosphoserine. T805 carries the phosphothreonine modification. Polar residues predominate over residues 808–818 (RDSSSSGHSQS). The short motif at 875-902 (QSGFGEEYFDESSQSGDNDDFKGFASQA) is the Integrase domain-binding motif (IBM) element. Phosphoserine occurs at positions 887, 953, and 955. Over residues 963–974 (LGKEKTQKRVKE) the composition is skewed to basic and acidic residues. Residues 976–986 (NGTGASSGSGP) are compositionally biased toward gly residues. A Phosphothreonine; by MAPK1 or MAPK3 modification is found at T1032. Residues 1034–1051 (PTSTGGSKSPGSSGRSQT) are compositionally biased toward low complexity. 2 positions are modified to phosphothreonine: T1051 and T1057. 2 stretches are compositionally biased toward low complexity: residues 1078-1094 (SSHSQYTSSGSVSSSGS) and 1101-1152 (SSSS…SQTG). S1158 is modified (phosphoserine). Positions 1158-1184 (SPITKHGLSSGSSSTKMKPQGKPSSLM) are enriched in polar residues. Position 1179 is an N6-acetyllysine (K1179). Low complexity predominate over residues 1185–1197 (NPSISKPNISPSH). S1209 carries the post-translational modification Phosphoserine. Position 1217 is a phosphothreonine (T1217). Low complexity-rich tracts occupy residues 1220-1258 (SSKAKSPISSGSSGSHVSGTSSSSGMKSSSGSASSGSVS) and 1265-1295 (SNSCTPSSSSFSSSGSSMSSSQNQHGSSKGK). Phosphoserine is present on S1225. The segment at 1251–1423 (SASSGSVSQK…KPGESGGDGL (173 aa)) is interaction with TP53. Phosphoserine occurs at positions 1304 and 1349. Residues 1331–1352 (MGASTNSSNHPMSSKHNTSGGE) show a composition bias toward polar residues. The segment covering 1354–1366 (QSKREKSDKDKSK) has biased composition (basic and acidic residues). Residues S1405 and S1435 each carry the phosphoserine modification. Polar residues-rich tracts occupy residues 1427-1442 (IASSKNYGSPLISGST) and 1450-1484 (PSHSKSPAYTPQNVDSESESGSSIAERSYQNSPSS). Residue T1442 is modified to Phosphothreonine. T1459 carries the post-translational modification Phosphothreonine; by MAPK1 or MAPK3. Phosphoserine is present on residues S1465, S1467, S1481, S1483, and S1484. Basic residues predominate over residues 1498–1507 (KHKKHKKEKK). The residue at position 1523 (K1523) is an N6-acetyllysine. Over residues 1527-1545 (WSKSPISSDPTASVTNNPI) the composition is skewed to polar residues.

This sequence belongs to the Mediator complex subunit 1 family. In terms of assembly, component of the Mediator complex, which is composed of MED1, MED4, MED6, MED7, MED8, MED9, MED10, MED11, MED12, MED13, MED13L, MED14, MED15, MED16, MED17, MED18, MED19, MED20, MED21, MED22, MED23, MED24, MED25, MED26, MED27, MED29, MED30, MED31, CCNC, CDK8 and CDC2L6/CDK11. The MED12, MED13, CCNC and CDK8 subunits form a distinct module termed the CDK8 module. Mediator containing the CDK8 module is less active than Mediator lacking this module in supporting transcriptional activation. Individual preparations of the Mediator complex lacking one or more distinct subunits have been variously termed ARC, CRSP, DRIP, PC2, SMCC and TRAP. This subunit specifically interacts with a number of nuclear receptors in a ligand-dependent fashion including AR, ESR1, ESR2, PPARA, PPARG, RORA, RXRA, RXRG, THRA, THRB and VDR. Interacts with CTNNB1, GABPA, GLI3, PPARGC1A and TP53. Interacts with GATA1 and YWHAH. Interacts with CLOCK; this interaction requires the presence of THRAP3. Interacts with CCAR1. Interacts with NR4A3. Interacts (via IBM motif) with PSIP1 (via IBD domain); phosphorylation increases its affinity for PSIP1. Interacts with USP22. Post-translationally, phosphorylated by MAPK1 or MAPK3 during G2/M phase which may enhance protein stability and promote entry into the nucleolus. Phosphorylation increases its interaction with PSIP1. As to expression, widely expressed in the adult, with high levels of expression in the liver, lung, intestinal mucosa, kidney cortex, thymic cortex, splenic follicle and seminiferous epithelium in testis. Also expressed in the adult heart, brain, spleen and skeletal muscle.

It is found in the nucleus. Its function is as follows. Component of the Mediator complex, a coactivator involved in the regulated transcription of nearly all RNA polymerase II-dependent genes. Mediator functions as a bridge to convey information from gene-specific regulatory proteins to the basal RNA polymerase II transcription machinery. Mediator is recruited to promoters by direct interactions with regulatory proteins and serves as a scaffold for the assembly of a functional preinitiation complex with RNA polymerase II and the general transcription factors. Essential for embryogenesis, including development of the central nervous system, heart, liver and placenta and for erythropoiesis. Also required for normal transcriptional control of thyroid-stimulating hormone beta (TSHB) in the pituitary. Acts as a coactivator for GATA1-mediated transcriptional activation during erythroid differentiation of K562 erythroleukemia cells. This is Mediator of RNA polymerase II transcription subunit 1 (Med1) from Mus musculus (Mouse).